Here is a 336-residue protein sequence, read N- to C-terminus: Di/tripeptide transport system permease protein DppB (336 aa).

6 helical membrane-spanning segments follow: residues 10–30 (GLLI…IRLI), 102–122 (LSLA…VIAA), 145–165 (IFWW…WTPV), 198–218 (AVRH…AVIA), 257–277 (LIPV…GAVL), and 307–327 (ILLV…LYGL). Positions 96–325 (FPATLELSLA…LVNFVVDILY (230 aa)) constitute an ABC transmembrane type-1 domain.

Belongs to the binding-protein-dependent transport system permease family. OppBC subfamily. The complex is composed of two ATP-binding proteins (DppD and DppF), two transmembrane proteins (DppB and DppC) and a solute-binding protein (DppA1-A5). Five orthologous SBPs (DppA1-A5) are present in P.aeruginosa, which increases the substrate specificity of the DppBCDF transporter.

Its subcellular location is the cell inner membrane. Its function is as follows. Part of the ABC transporter DppABCDF involved in the uptake of various di/tripeptides. Is also involved in the uptake of phaseolotoxin, a toxic tripeptide inhibiting the enzyme ornithine carbamoyltransferase. Responsible for the translocation of the substrate across the membrane. This Pseudomonas aeruginosa (strain UCBPP-PA14) protein is Di/tripeptide transport system permease protein DppB.